Consider the following 125-residue polypeptide: uncharacterized protein (125 aa).

The chain crosses the membrane as a helical span at residues 21–43; it reads KFSLIALVSFTALAIIVLYHNIS.

It localises to the membrane. This is an uncharacterized protein from Archaeoglobus fulgidus (strain ATCC 49558 / DSM 4304 / JCM 9628 / NBRC 100126 / VC-16).